Consider the following 790-residue polypeptide: PAN2-PAN3 deadenylation complex subunit PAN3 (790 aa).

Disordered regions lie at residues 166 to 191 (IAQQ…AVSA) and 235 to 259 (AMIS…ASPI). Over residues 168-191 (QQQPQHPQKQQQHPPSVGGGAVSA) the composition is skewed to low complexity. Residues 369–655 (DAAEAAQHAL…SVTDLMPMIG (287 aa)) are pseudokinase domain. ATP-binding positions include arginine 423, 472-479 (DYHPGSQT), and 552-553 (TK). Residues 656–694 (ARFYTQLDALQSKIDMQEDELAKEMENGRLYRILVKLNS) are a coiled coil. The interval 695–790 (INERPDFNLD…FSELMSSAAN (96 aa)) is knob domain.

This sequence belongs to the protein kinase superfamily. PAN3 family. Homodimer. Forms a heterotrimer with a catalytic subunit PAN2 to form the poly(A)-nuclease (PAN) deadenylation complex. Interacts (via PAM-2 motif) with poly(A)-binding protein (via PABC domain), conferring substrate specificity of the enzyme complex. Interacts with the GW182 family protein gw. Interacts with Gyf.

The protein resides in the cytoplasm. It is found in the P-body. Regulatory subunit of the poly(A)-nuclease (PAN) deadenylation complex, one of two cytoplasmic mRNA deadenylases involved in general and miRNA-mediated mRNA turnover. PAN specifically shortens poly(A) tails of RNA and the activity is stimulated by poly(A)-binding protein (PABP). PAN deadenylation is followed by rapid degradation of the shortened mRNA tails by the CCR4-NOT complex. Deadenylated mRNAs are then degraded by two alternative mechanisms, namely exosome-mediated 3'-5' exonucleolytic degradation, or deadenylation-dependent mRNA decaping and subsequent 5'-3' exonucleolytic degradation by XRN1. PAN3 acts as a positive regulator for PAN activity, recruiting the catalytic subunit PAN2 to mRNA via its interaction with RNA and PABP, and to miRNA targets via its interaction with GW182 family proteins. This chain is PAN2-PAN3 deadenylation complex subunit PAN3, found in Drosophila melanogaster (Fruit fly).